Consider the following 429-residue polypeptide: Adenylosuccinate synthetase (429 aa).

GTP contacts are provided by residues 12 to 18 and 40 to 42; these read GDEGKGK and GHT. Asp13 serves as the catalytic Proton acceptor. 2 residues coordinate Mg(2+): Asp13 and Gly40. IMP contacts are provided by residues 13-16, 38-41, Thr128, Arg142, Gln223, Thr238, and Arg302; these read DEGK and NAGH. His41 (proton donor) is an active-site residue. 298 to 304 lines the substrate pocket; sequence VNTGRPR. Residues Arg304, 330-332, and 412-414 contribute to the GTP site; these read KLD and GVG.

It belongs to the adenylosuccinate synthetase family. As to quaternary structure, homodimer. It depends on Mg(2+) as a cofactor.

The protein localises to the cytoplasm. The catalysed reaction is IMP + L-aspartate + GTP = N(6)-(1,2-dicarboxyethyl)-AMP + GDP + phosphate + 2 H(+). The protein operates within purine metabolism; AMP biosynthesis via de novo pathway; AMP from IMP: step 1/2. Plays an important role in the de novo pathway of purine nucleotide biosynthesis. Catalyzes the first committed step in the biosynthesis of AMP from IMP. This Pseudarthrobacter chlorophenolicus (strain ATCC 700700 / DSM 12829 / CIP 107037 / JCM 12360 / KCTC 9906 / NCIMB 13794 / A6) (Arthrobacter chlorophenolicus) protein is Adenylosuccinate synthetase.